A 225-amino-acid chain; its full sequence is Insulin-induced gene 2 protein (225 aa).

The Cytoplasmic portion of the chain corresponds to 1–28 (MAEGETESPRPKKCGPYISSVTSQSVNV). Residues 29–51 (VIRGVVLFFIGVFLALVLNLLQI) form a helical membrane-spanning segment. The Lumenal segment spans residues 52-70 (QRNVTLFPPDVITSIFSSA). The helical transmembrane segment at 71–88 (WWVPPCCGTASAVIGLLY) threads the bilayer. Residues 89–103 (PCIDRHLGEPHKFKR) lie on the Cytoplasmic side of the membrane. Residues 104–126 (EWSSVMRCVAVFVGINHASAKVD) form a helical membrane-spanning segment. The Lumenal segment spans residues 127–129 (FDN). The helical transmembrane segment at 130–148 (NFQFSLTLAALSVGLWWTF) threads the bilayer. Over 149–153 (DRSRS) the chain is Cytoplasmic. Serine 151 bears the Phosphoserine mark. The helical transmembrane segment at 154–175 (GFGLGVGIAFLATVVTQLLVYN) threads the bilayer. The Lumenal segment spans residues 176–189 (GVYQYTSPDFLYVR). A helical transmembrane segment spans residues 190-207 (SWLPCIFFAGGITMGNIG). Over 208–225 (RQLAMYECKVIAEKSHQE) the chain is Cytoplasmic. A Cysteine sulfenic acid (-SOH); alternate modification is found at cysteine 215. Cysteine 215 is covalently cross-linked (Glycyl cysteine thioester (Cys-Gly) (interchain with G-Cter in ubiquitin); alternate). The short motif at 219 to 225 (AEKSHQE) is the KxHxx element.

The protein belongs to the INSIG family. As to quaternary structure, interacts with SCAP; interaction is direct and only takes place in the presence of sterols; it prevents interaction between SCAP and the coat protein complex II (COPII). Associates with the SCAP-SREBP complex (composed of SCAP and SREBF1/SREBP1 or SREBF2/SREBP2); association is mediated via its interaction with SCAP and only takes place in the presence of sterols. Interacts with RNF139. Interacts with RNF145. In terms of processing, phosphorylation at Ser-151 by PCK1 reduces binding to oxysterol, disrupting the interaction between INSIG2 and SCAP, thereby promoting nuclear translocation of SREBP proteins (SREBF1/SREBP1 or SREBF2/SREBP2) and subsequent transcription of downstream lipogenesis-related genes. Polyubiquitinated by AMFR/gp78 at Cys-215 in some tissues such as adipose tissues, undifferentiated myoblasts and liver, leading to its degradation. In differentiated myotubes, Cys-215 oxidation prevents ubiquitination at the same site, resulting in protein stabilization. Post-translationally, oxidized at Cys-215 in differentiated myotubes, preventing ubiquitination at the same site, and resulting in protein stabilization. Expressed in liver, testis, kidney, spleen, intestine, brain and adrenal gland.

It localises to the endoplasmic reticulum membrane. Oxysterol-binding protein that mediates feedback control of cholesterol synthesis by controlling both endoplasmic reticulum to Golgi transport of SCAP and degradation of HMGCR. Acts as a negative regulator of cholesterol biosynthesis by mediating the retention of the SCAP-SREBP complex in the endoplasmic reticulum, thereby blocking the processing of sterol regulatory element-binding proteins (SREBPs) SREBF1/SREBP1 and SREBF2/SREBP2. Binds oxysterol, including 22-hydroxycholesterol, 24-hydroxycholesterol, 25-hydroxycholesterol and 27-hydroxycholesterol, regulating interaction with SCAP and retention of the SCAP-SREBP complex in the endoplasmic reticulum. In presence of oxysterol, interacts with SCAP, retaining the SCAP-SREBP complex in the endoplasmic reticulum, thereby preventing SCAP from escorting SREBF1/SREBP1 and SREBF2/SREBP2 to the Golgi. Sterol deprivation or phosphorylation by PCK1 reduce oxysterol-binding, disrupting the interaction between INSIG2 and SCAP, thereby promoting Golgi transport of the SCAP-SREBP complex, followed by processing and nuclear translocation of SREBF1/SREBP1 and SREBF2/SREBP2. Also regulates cholesterol synthesis by regulating degradation of HMGCR: initiates the sterol-mediated ubiquitin-mediated endoplasmic reticulum-associated degradation (ERAD) of HMGCR via recruitment of the reductase to the ubiquitin ligase RNF139. This Mus musculus (Mouse) protein is Insulin-induced gene 2 protein.